The following is a 382-amino-acid chain: Myb-like transcription factor (382 aa).

Myb-like domains follow at residues 1–57 (MPRS…RWSK), 58–108 (ITGA…QHCL), and 109–160 (DPSL…ITLF). Acidic residues predominate over residues 194–210 (MSMDASEDGDDAEDDQT). The segment at 194–240 (MSMDASEDGDDAEDDQTPDSYTSISTSSFDDILGGSSSSPSAADTMT) is disordered. Positions 211–240 (PDSYTSISTSSFDDILGGSSSSPSAADTMT) are enriched in polar residues.

It localises to the nucleus. Functionally, transcription factor; part of the gene cluster that mediates the biosynthesis of 1233A, a natural compound known as an inhibitor of HMG-CoA synthase in the mevalonate pathway and with antibacterial and antifungal activities. Involved in hygromycin B-induced transcriptional control of the cluster. The chain is Myb-like transcription factor from Fusarium sp.